Consider the following 715-residue polypeptide: 1,4-alpha-glucan branching enzyme GlgB (715 aa).

The active-site Nucleophile is the Asp399. Residue Glu452 is the Proton donor of the active site.

The protein belongs to the glycosyl hydrolase 13 family. GlgB subfamily. Monomer.

It catalyses the reaction Transfers a segment of a (1-&gt;4)-alpha-D-glucan chain to a primary hydroxy group in a similar glucan chain.. It participates in glycan biosynthesis; glycogen biosynthesis. Catalyzes the formation of the alpha-1,6-glucosidic linkages in glycogen by scission of a 1,4-alpha-linked oligosaccharide from growing alpha-1,4-glucan chains and the subsequent attachment of the oligosaccharide to the alpha-1,6 position. The polypeptide is 1,4-alpha-glucan branching enzyme GlgB (Rhodopseudomonas palustris (strain BisA53)).